The primary structure comprises 344 residues: Centromere protein L (344 aa).

Residues 1–32 form a disordered region; that stretch reads MAGGRPAGSAIEMEGAMRTLPSSGRPSGTGWQ. Over residues 20–32 the composition is skewed to polar residues; it reads LPSSGRPSGTGWQ.

It belongs to the CENP-L/IML3 family. As to quaternary structure, component of the CENPA-HI complex, at least composed of CENPH, CENPI, CENPK, CENPL, CENPM, CENPO and CENPP.

Its subcellular location is the nucleus. It localises to the chromosome. The protein localises to the centromere. Component of the CENPA-HI complex, a centromeric complex involved in assembly of kinetochore proteins, mitotic progression and chromosome segregation. In Gallus gallus (Chicken), this protein is Centromere protein L (CENPL).